Here is a 472-residue protein sequence, read N- to C-terminus: ATP-dependent protease ATPase subunit HslU (472 aa).

Residues Ile-20, 62 to 67 (GVGKTE), Asp-285, Glu-350, and Arg-422 contribute to the ATP site.

It belongs to the ClpX chaperone family. HslU subfamily. In terms of assembly, a double ring-shaped homohexamer of HslV is capped on each side by a ring-shaped HslU homohexamer. The assembly of the HslU/HslV complex is dependent on binding of ATP.

It is found in the cytoplasm. Functionally, ATPase subunit of a proteasome-like degradation complex; this subunit has chaperone activity. The binding of ATP and its subsequent hydrolysis by HslU are essential for unfolding of protein substrates subsequently hydrolyzed by HslV. HslU recognizes the N-terminal part of its protein substrates and unfolds these before they are guided to HslV for hydrolysis. This Lactiplantibacillus plantarum (strain ATCC BAA-793 / NCIMB 8826 / WCFS1) (Lactobacillus plantarum) protein is ATP-dependent protease ATPase subunit HslU.